Reading from the N-terminus, the 253-residue chain is Large ribosomal subunit protein uL4 (253 aa).

This sequence belongs to the universal ribosomal protein uL4 family. In terms of assembly, part of the 50S ribosomal subunit.

Functionally, one of the primary rRNA binding proteins, this protein initially binds near the 5'-end of the 23S rRNA. It is important during the early stages of 50S assembly. It makes multiple contacts with different domains of the 23S rRNA in the assembled 50S subunit and ribosome. In terms of biological role, forms part of the polypeptide exit tunnel. The chain is Large ribosomal subunit protein uL4 from Methanococcoides burtonii (strain DSM 6242 / NBRC 107633 / OCM 468 / ACE-M).